A 272-amino-acid chain; its full sequence is Small ribosomal subunit protein uS2 (272 aa).

The tract at residues 238–272 (ASKEEQTEEAEEETLSSKYREQDFQEAKSGARGEK) is disordered. Residues 255 to 272 (KYREQDFQEAKSGARGEK) show a composition bias toward basic and acidic residues.

This sequence belongs to the universal ribosomal protein uS2 family.

This Protochlamydia amoebophila (strain UWE25) protein is Small ribosomal subunit protein uS2.